The sequence spans 116 residues: Large ribosomal subunit protein bL20c (116 aa).

The protein belongs to the bacterial ribosomal protein bL20 family.

Its subcellular location is the plastid. The protein localises to the chloroplast. Binds directly to 23S ribosomal RNA and is necessary for the in vitro assembly process of the 50S ribosomal subunit. It is not involved in the protein synthesizing functions of that subunit. The sequence is that of Large ribosomal subunit protein bL20c from Rhodomonas salina (Cryptomonas salina).